The sequence spans 119 residues: Phytosulfokines 2 (119 aa).

Residues Met-1–Ala-34 form the signal peptide. Residues Ala-35–Asp-109 constitute a propeptide that is removed on maturation. Sulfotyrosine is present on residues Tyr-110 and Tyr-112. Residues His-115–Pro-119 constitute a propeptide that is removed on maturation.

The protein belongs to the phytosulfokine family. Post-translationally, sulfation is important for activity and for the binding to a putative membrane receptor. PSK-alpha is produced by endopeptidase digestion. PSK-beta is produced from PSK-alpha by exopeptidase digestion.

It localises to the secreted. Functionally, promotes plant cell differentiation, organogenesis and somatic embryogenesis as well as cell proliferation. The protein is Phytosulfokines 2 (PSK2) of Oryza sativa subsp. japonica (Rice).